A 695-amino-acid chain; its full sequence is Variediene synthase (695 aa).

The interval 1 to 23 is disordered; that stretch reads MVPTSLSPDDTSDPVPRSSSDIQ. A terpene cyclase region spans residues 7–332; that stretch reads SPDDTSDPVP…PRYHPWLCEE (326 aa). Asp-98 is a Mg(2+) binding site. Residues Asp-98, 184-187, Asn-228, 232-236, and 324-325 each bind substrate; these read RIID, SFDIE, and RY. The DDXXD 1 motif lies at 98-102; the sequence is DNVVE. Positions 228–236 match the NSE/DTE motif; sequence NDYFSFDIE. Residues 353–392 form a disordered region; the sequence is RRSISGDSISSESSVWSGASDRSARSSVSSAPSLDEGKEP. A compositionally biased stretch (low complexity) spans 357–385; sequence SGDSISSESSVWSGASDRSARSSVSSAPS. Isopentenyl diphosphate contacts are provided by Lys-415, Arg-418, and His-447. Mg(2+) contacts are provided by Asp-454 and Asp-458. Positions 454 to 458 match the DDXXD 2 motif; it reads DDIED. A dimethylallyl diphosphate-binding site is contributed by Arg-463. Arg-464 lines the isopentenyl diphosphate pocket. 6 residues coordinate dimethylallyl diphosphate: Lys-541, Thr-542, Gln-579, Asn-586, Lys-595, and Lys-605.

In the N-terminal section; belongs to the terpene synthase family. The protein in the C-terminal section; belongs to the FPP/GGPP synthase family. Hexamer. Mg(2+) serves as cofactor.

The catalysed reaction is isopentenyl diphosphate + (2E,6E)-farnesyl diphosphate = (2E,6E,10E)-geranylgeranyl diphosphate + diphosphate. It catalyses the reaction (2E,6E,10E)-geranylgeranyl diphosphate = variediene + diphosphate. It functions in the pathway secondary metabolite biosynthesis; terpenoid biosynthesis. In terms of biological role, bifunctional terpene synthase converts DMAPP and IPP, and also GGPP, into variediene as a single product. The C-terminal prenyltransferase domain of AbVS catalyzes formation of GGPP, whereas the N-terminal terpene cyclase domain catalyzes the cyclization of GGPP to variediene. The sequence is that of Variediene synthase from Aspergillus brasiliensis (strain CBS 101740 / IMI 381727 / IBT 21946).